We begin with the raw amino-acid sequence, 187 residues long: Casparian strip membrane protein 5 (187 aa).

Residues 1 to 24 (MKSGQAEIVETSKGIQKSGLMSRR) lie on the Cytoplasmic side of the membrane. The chain crosses the membrane as a helical span at residues 25 to 45 (IAILEFILRIVAFFNTIGSAI). Residues 46-74 (LMGTTHETLPFFTQFIRFQAEYNDLPALT) are Extracellular-facing. Residues 75–95 (FFVVANAVVSGYLIMSLTLAF) traverse the membrane as a helical segment. Topologically, residues 96–107 (VHIVKRKTQNTR) are cytoplasmic. Residues 108–128 (ILLIVLDVAMLGLLSAGASSA) traverse the membrane as a helical segment. Topologically, residues 129-161 (AAIVYLAHNGNNKTNWFAICQQFNSFCERISGS) are extracellular. Residue N140 is glycosylated (N-linked (GlcNAc...) asparagine). The chain crosses the membrane as a helical span at residues 162-182 (LIGSFIAVVLLILLILLSAIA). Residues 183–187 (LSRRH) are Cytoplasmic-facing.

Belongs to the Casparian strip membrane proteins (CASP) family. Homodimer and heterodimers.

It is found in the cell membrane. Functionally, regulates membrane-cell wall junctions and localized cell wall deposition. Required for establishment of the Casparian strip membrane domain (CSD) and the subsequent formation of Casparian strips, a cell wall modification of the root endodermis that determines an apoplastic barrier between the intraorganismal apoplasm and the extraorganismal apoplasm and prevents lateral diffusion. The sequence is that of Casparian strip membrane protein 5 from Arabidopsis lyrata subsp. lyrata (Lyre-leaved rock-cress).